The primary structure comprises 441 residues: G2/mitotic-specific cyclin-2 (441 aa).

The protein belongs to the cyclin family. Cyclin AB subfamily. In terms of assembly, interacts with the CDC2 and CDK2 protein kinases to form a serine/threonine kinase holoenzyme complex. The cyclin subunit imparts substrate specificity to the complex.

In terms of biological role, essential for the control of the cell cycle at the G2/M (mitosis) transition. G2/M cyclins accumulate steadily during G2 and are abruptly destroyed at mitosis. The polypeptide is G2/mitotic-specific cyclin-2 (Antirrhinum majus (Garden snapdragon)).